Consider the following 260-residue polypeptide: MICOS complex subunit mic25-a (260 aa).

The interval methionine 1–glutamine 92 is disordered. Residue glycine 2 is the site of N-myristoyl glycine attachment. Residues arginine 28–aspartate 39 show a composition bias toward basic and acidic residues. A compositionally biased stretch (low complexity) spans serine 48–serine 64. Residues alanine 94–glutamate 187 adopt a coiled-coil conformation. Residues aspartate 213–leucine 255 form the CHCH domain. Short sequence motifs (cx9C motif) lie at residues cysteine 216 to cysteine 226 and cysteine 237 to cysteine 247. Intrachain disulfides connect cysteine 216/cysteine 247 and cysteine 226/cysteine 237.

Belongs to the MICOS complex subunit Mic19 family. Metazoan Mic25 subfamily. As to quaternary structure, component of the mitochondrial contact site and cristae organizing system (MICOS) complex (also known as MINOS or MitOS complex).

The protein resides in the mitochondrion inner membrane. Component of the MICOS complex, a large protein complex of the mitochondrial inner membrane that plays crucial roles in the maintenance of crista junctions, inner membrane architecture, and formation of contact sites to the outer membrane. The polypeptide is MICOS complex subunit mic25-a (chchd6-a) (Xenopus laevis (African clawed frog)).